The primary structure comprises 306 residues: MQLSKAAEMCYEITNSYLHIDQKSQIIASTQEAIRLTRKYLLSEIFVRWSPLNGEISFSYNGGKDCQVLLLLYLSCLWEYFFIKAQNSQFDFEFQSFPMQRLPTVFIDQEETFPTLENFVLETSERYCLSLYESQRQSGASVNMADAFRDFIKIYPETEAIVIGIRHTDPFGEALKPIQRTDSNWPDFMRLQPLLHWDLTNIWSFLLYSNEPICGLYGKGFTSIGGINNSLPNPHLRKDSNNPALHFEWEIIHAFGKDAEGERSSAINTSPISVVDKERFSKYHDNYYPGWYLVDDTLERAGRIKN.

FAD is bound by residues Ser-59, Ile-107, Gly-164, 182–185 (DSNW), Arg-190, and Arg-300.

Belongs to the PAPS reductase family. FAD1 subfamily.

It localises to the cytoplasm. The catalysed reaction is FMN + ATP + H(+) = FAD + diphosphate. It functions in the pathway cofactor biosynthesis; FAD biosynthesis; FAD from FMN: step 1/1. Functionally, catalyzes the adenylation of flavin mononucleotide (FMN) to form flavin adenine dinucleotide (FAD) coenzyme. This Saccharomyces cerevisiae (strain ATCC 204508 / S288c) (Baker's yeast) protein is Flavin adenine dinucleotide synthase.